A 61-amino-acid polypeptide reads, in one-letter code: Small ribosomal subunit protein uS14B (61 aa).

4 residues coordinate Zn(2+): Cys-24, Cys-27, Cys-40, and Cys-43.

The protein belongs to the universal ribosomal protein uS14 family. Zinc-binding uS14 subfamily. As to quaternary structure, part of the 30S ribosomal subunit. Contacts proteins S3 and S10. Requires Zn(2+) as cofactor.

Binds 16S rRNA, required for the assembly of 30S particles and may also be responsible for determining the conformation of the 16S rRNA at the A site. In Salinispora arenicola (strain CNS-205), this protein is Small ribosomal subunit protein uS14B.